Reading from the N-terminus, the 395-residue chain is Major outer membrane protein P.IA (395 aa).

Positions 1-19 (MRKKLTALVLSALPLAAVA) are cleaved as a signal peptide.

Belongs to the Gram-negative porin family. As to quaternary structure, homotrimer.

It localises to the cell outer membrane. Serves as a slightly cation selective porin. Major antigen on the gonococcal cell surface and it may have pathogenic properties in addition to its porin activity. The polypeptide is Major outer membrane protein P.IA (porA) (Neisseria meningitidis serogroup A / serotype 4A (strain DSM 15465 / Z2491)).